Consider the following 364-residue polypeptide: V-type proton ATPase subunit d (364 aa).

The protein belongs to the V-ATPase V0D/AC39 subunit family. In terms of assembly, V-ATPase is a heteromultimeric enzyme composed of a peripheral catalytic V1 complex (components A to H) attached to an integral membrane V0 proton pore complex (components: a, c, c', c'', d, e, f and VOA1).

The protein resides in the vacuole membrane. In terms of biological role, subunit of the V0 complex of vacuolar(H+)-ATPase (V-ATPase), a multisubunit enzyme composed of a peripheral complex (V1) that hydrolyzes ATP and a membrane integral complex (V0) that translocates protons. V-ATPase is responsible for acidifying and maintaining the pH of intracellular compartments. This subunit is a non-integral membrane component of the membrane pore domain and is required for proper assembly of the V0 sector. Might be involved in the regulated assembly of V1 subunits onto the membrane sector or alternatively may prevent the passage of protons through V0 pores. The protein is V-type proton ATPase subunit d of Neurospora crassa (strain ATCC 24698 / 74-OR23-1A / CBS 708.71 / DSM 1257 / FGSC 987).